We begin with the raw amino-acid sequence, 480 residues long: Alkaline nuclease (480 aa).

This sequence belongs to the herpesviridae alkaline nuclease family. As to quaternary structure, interacts with major DNA-binding protein; this interaction increases the nuclease processivity of the alkaline exonuclease.

It localises to the host nucleus. Its subcellular location is the host cytoplasm. In terms of biological role, plays a role in processing non linear or branched viral DNA intermediates in order to promote the production of mature packaged unit-length linear progeny viral DNA molecules. Exhibits endonuclease and exonuclease activities and accepts both double-stranded and single-stranded DNA as substrate. Exonuclease digestion of DNA is in the 5'-&gt; 3' direction and the products are 5'-monophosphate nucleosides. Additionally, forms a recombinase with the major DNA-binding protein, which displays strand exchange activity. This is Alkaline nuclease (U70) from Homo sapiens (Human).